A 470-amino-acid polypeptide reads, in one-letter code: Myricetin 3-O-rhamnoside 1,2-glucosyltransferase UGT709G2 (470 aa).

Histidine 20 serves as the catalytic Proton acceptor. Histidine 20 serves as a coordination point for an anthocyanidin. Catalysis depends on aspartate 117, which acts as the Charge relay. The UDP-alpha-D-glucose site is built by alanine 340, glutamine 342, histidine 357, tryptophan 360, asparagine 361, serine 362, and glutamate 365. Alanine 380 serves as a coordination point for an anthocyanidin. Residues aspartate 381 and glutamine 382 each coordinate UDP-alpha-D-glucose.

Belongs to the UDP-glycosyltransferase family. Expressed in young cromes.

It catalyses the reaction myricetin 3-O-alpha-L-rhamnoside + UDP-alpha-D-glucose = myricetin 3-O-[beta-D-glucosyl-(1-&gt;2)-alpha-L-rhamnoside] + UDP + H(+). Its pathway is flavonoid metabolism. Functionally, glucosyltransferase involved in montbretin A (MbA) biosynthesis. Catalyzes the glucosylation of myricetin 3-O-alpha-L-rhamnoside (MR) to produce myricetin 3-O-[beta-D-glucosyl-(1-&gt;2)-alpha-L-rhamnoside] (MRG), a precursor of MbA. MbA is a potent inhibitor of human pancreatic alpha-amylase and is being developed as drug candidate to treat type-2 diabetes. In vitro, is able to transfer UDP-xylose with 50-fold less efficiency compared with UDP-glucose. In vitro, can use myricetin 3-O-glucoside and quercetin 3-O-glucoside as substrates, although these two flavonoids may not be physiological substrates in vivo. This chain is Myricetin 3-O-rhamnoside 1,2-glucosyltransferase UGT709G2, found in Crocosmia x crocosmiiflora (Montbretia).